The following is a 368-amino-acid chain: Putative transport protein bbp_117 (368 aa).

A run of 8 helical transmembrane segments spans residues 13–35 (VIFS…RPFF), 39–61 (AWAS…LLWG), 68–90 (VMMT…NSLI), 159–181 (HFGR…YWNG), 216–238 (LGVV…ISGI), 248–270 (IIIF…IWLY), 277–299 (WGTV…RPIL), and 314–336 (GVIG…VLII).

Belongs to the autoinducer-2 exporter (AI-2E) (TC 2.A.86) family.

The protein resides in the cell membrane. The polypeptide is Putative transport protein bbp_117 (Buchnera aphidicola subsp. Baizongia pistaciae (strain Bp)).